Reading from the N-terminus, the 121-residue chain is Large ribosomal subunit protein bL19 (121 aa).

The protein belongs to the bacterial ribosomal protein bL19 family.

Functionally, this protein is located at the 30S-50S ribosomal subunit interface and may play a role in the structure and function of the aminoacyl-tRNA binding site. The sequence is that of Large ribosomal subunit protein bL19 from Symbiobacterium thermophilum (strain DSM 24528 / JCM 14929 / IAM 14863 / T).